The sequence spans 72 residues: Translation initiation factor IF-1 (72 aa).

One can recognise an S1-like domain in the interval 1-72 (MSKDDVIEMQ…SRGRITWRAK (72 aa)).

The protein belongs to the IF-1 family. Component of the 30S ribosomal translation pre-initiation complex which assembles on the 30S ribosome in the order IF-2 and IF-3, IF-1 and N-formylmethionyl-tRNA(fMet); mRNA recruitment can occur at any time during PIC assembly.

It is found in the cytoplasm. Functionally, one of the essential components for the initiation of protein synthesis. Stabilizes the binding of IF-2 and IF-3 on the 30S subunit to which N-formylmethionyl-tRNA(fMet) subsequently binds. Helps modulate mRNA selection, yielding the 30S pre-initiation complex (PIC). Upon addition of the 50S ribosomal subunit IF-1, IF-2 and IF-3 are released leaving the mature 70S translation initiation complex. This is Translation initiation factor IF-1 from Clostridium novyi (strain NT).